We begin with the raw amino-acid sequence, 521 residues long: Aldehyde dehydrogenase, mitochondrial (521 aa).

A mitochondrion-targeting transit peptide spans 1-21 (MLRPAALAAARLVLRQGRRLL). Positions 13 to 28 (VLRQGRRLLSAAPTQA) match the SIFI-degron motif. K56, K77, and K163 each carry N6-acetyllysine. Residue 266 to 271 (GSTEVG) coordinates NAD(+). The Proton acceptor role is filled by E289. Catalysis depends on C323, which acts as the Nucleophile. K372, K379, K387, K430, K432, K445, and K455 each carry N6-acetyllysine.

It belongs to the aldehyde dehydrogenase family. As to quaternary structure, homotetramer. In response to mitochondrial stress, the precursor protein is ubiquitinated by the SIFI complex in the cytoplasm before mitochondrial import, leading to its degradation. Within the SIFI complex, UBR4 initiates ubiquitin chain that are further elongated or branched by KCMF1.

The protein resides in the mitochondrion matrix. It carries out the reaction an aldehyde + NAD(+) + H2O = a carboxylate + NADH + 2 H(+). It functions in the pathway alcohol metabolism; ethanol degradation; acetate from ethanol: step 2/2. Functionally, required for clearance of cellular formaldehyde, a cytotoxic and carcinogenic metabolite that induces DNA damage. The protein is Aldehyde dehydrogenase, mitochondrial (ALDH2) of Sus scrofa (Pig).